The sequence spans 197 residues: Peptide deformylase (197 aa).

Fe cation is bound by residues C106 and H148. The active site involves E149. A Fe cation-binding site is contributed by H152.

This sequence belongs to the polypeptide deformylase family. Fe(2+) is required as a cofactor.

It carries out the reaction N-terminal N-formyl-L-methionyl-[peptide] + H2O = N-terminal L-methionyl-[peptide] + formate. Its function is as follows. Removes the formyl group from the N-terminal Met of newly synthesized proteins. Requires at least a dipeptide for an efficient rate of reaction. N-terminal L-methionine is a prerequisite for activity but the enzyme has broad specificity at other positions. The polypeptide is Peptide deformylase (Mycolicibacterium paratuberculosis (strain ATCC BAA-968 / K-10) (Mycobacterium paratuberculosis)).